The primary structure comprises 805 residues: Leucine--tRNA ligase (805 aa).

The 'HIGH' region motif lies at P40–H51. The 'KMSKS' region motif lies at K577–S581. K580 lines the ATP pocket.

It belongs to the class-I aminoacyl-tRNA synthetase family.

The protein localises to the cytoplasm. The catalysed reaction is tRNA(Leu) + L-leucine + ATP = L-leucyl-tRNA(Leu) + AMP + diphosphate. This Pediococcus pentosaceus (strain ATCC 25745 / CCUG 21536 / LMG 10740 / 183-1w) protein is Leucine--tRNA ligase.